The following is a 216-amino-acid chain: MIF4G domain-containing protein A (216 aa).

One can recognise an MIF4G domain in the interval 2–199; sequence DSAWTALDME…LEILEFRASG (198 aa).

It belongs to the MIF4GD family. In terms of assembly, interacts with eif4g1, eif4g2 and slbp; probably tethered by SLBP to the 3'-end of mRNAs ending with the histone stem-loop, it also interacts with eif4g1 which is bound to their 5'-end.

It is found in the cytoplasm. It localises to the nucleus. Its function is as follows. Functions in replication-dependent translation of histone mRNAs which differ from other eukaryotic mRNAs in that they do not end with a poly-A tail but a stem-loop. May participate in circularizing those mRNAs specifically enhancing their translation. The protein is MIF4G domain-containing protein A (mif4gda) of Danio rerio (Zebrafish).